The sequence spans 379 residues: Cytochrome b (379 aa).

4 helical membrane passes run 33 to 53 (FGSL…FLAM), 77 to 98 (WLIR…YLHI), 113 to 133 (WNIG…GYVL), and 178 to 198 (FFTF…LHLL). Heme b contacts are provided by histidine 83 and histidine 97. 2 residues coordinate heme b: histidine 182 and histidine 196. Histidine 201 is a binding site for a ubiquinone. A run of 4 helical transmembrane segments spans residues 226-246 (YKDL…VLFS), 288-308 (LGGV…PLLH), 320-340 (FSQT…WIGG), and 347-367 (FIII…VVMP).

Belongs to the cytochrome b family. In terms of assembly, the cytochrome bc1 complex contains 3 respiratory subunits (MT-CYB, CYC1 and UQCRFS1), 2 core proteins (UQCRC1 and UQCRC2) and probably 6 low-molecular weight proteins. It depends on heme b as a cofactor.

It localises to the mitochondrion inner membrane. In terms of biological role, component of the ubiquinol-cytochrome c reductase complex (complex III or cytochrome b-c1 complex) that is part of the mitochondrial respiratory chain. The b-c1 complex mediates electron transfer from ubiquinol to cytochrome c. Contributes to the generation of a proton gradient across the mitochondrial membrane that is then used for ATP synthesis. The protein is Cytochrome b (MT-CYB) of Iguana iguana (Common iguana).